We begin with the raw amino-acid sequence, 121 residues long: Phosphoribosyl-ATP pyrophosphatase (121 aa).

Belongs to the PRA-PH family.

Its subcellular location is the cytoplasm. The catalysed reaction is 1-(5-phospho-beta-D-ribosyl)-ATP + H2O = 1-(5-phospho-beta-D-ribosyl)-5'-AMP + diphosphate + H(+). It functions in the pathway amino-acid biosynthesis; L-histidine biosynthesis; L-histidine from 5-phospho-alpha-D-ribose 1-diphosphate: step 2/9. In Burkholderia ambifaria (strain MC40-6), this protein is Phosphoribosyl-ATP pyrophosphatase.